Consider the following 38-residue polypeptide: Small ribosomal subunit protein eS32 (38 aa).

Belongs to the eukaryotic ribosomal protein eS32 family. As to quaternary structure, component of the small ribosomal subunit (SSU).

This is Small ribosomal subunit protein eS32 (rpl41e) from Methanocaldococcus jannaschii (strain ATCC 43067 / DSM 2661 / JAL-1 / JCM 10045 / NBRC 100440) (Methanococcus jannaschii).